Reading from the N-terminus, the 77-residue chain is Secapin (77 aa).

Positions 1 to 32 (MKNYSKNATYLITVLLFSFVAMLLIIPSKCEA) are cleaved as a signal peptide. The propeptide occupies 33-52 (VSNDMQPLEARTADLVQQPR). Cys-61 and Cys-72 are disulfide-bonded.

The protein belongs to the secapin family. In terms of tissue distribution, expressed by the venom gland.

Its subcellular location is the secreted. Functionally, nontoxic peptide. This chain is Secapin, found in Apis cerana cerana (Oriental honeybee).